The primary structure comprises 582 residues: Aspartate--tRNA ligase (582 aa).

Residue Glu174 coordinates L-aspartate. The interval 198 to 201 (QITK) is aspartate. Arg220 is a binding site for L-aspartate. Residues 220 to 222 (RDE) and Gln229 each bind ATP. Residue His443 coordinates L-aspartate. Glu477 is an ATP binding site. L-aspartate is bound at residue Arg484. 529–532 (GLDR) contacts ATP.

The protein belongs to the class-II aminoacyl-tRNA synthetase family. Type 1 subfamily. Homodimer.

It localises to the cytoplasm. The catalysed reaction is tRNA(Asp) + L-aspartate + ATP = L-aspartyl-tRNA(Asp) + AMP + diphosphate. Functionally, catalyzes the attachment of L-aspartate to tRNA(Asp) in a two-step reaction: L-aspartate is first activated by ATP to form Asp-AMP and then transferred to the acceptor end of tRNA(Asp). This chain is Aspartate--tRNA ligase, found in Streptococcus pyogenes serotype M3 (strain ATCC BAA-595 / MGAS315).